The primary structure comprises 833 residues: Leucine--tRNA ligase (833 aa).

The 'HIGH' region signature appears at 41-52 (PYPSGAGLHVGH). The 'KMSKS' region motif lies at 610–614 (KMSKS). Lys613 lines the ATP pocket.

Belongs to the class-I aminoacyl-tRNA synthetase family.

Its subcellular location is the cytoplasm. It catalyses the reaction tRNA(Leu) + L-leucine + ATP = L-leucyl-tRNA(Leu) + AMP + diphosphate. The protein is Leucine--tRNA ligase of Streptococcus equi subsp. zooepidemicus (strain H70).